Reading from the N-terminus, the 212-residue chain is Adenylate kinase (212 aa).

10-15 contacts ATP; the sequence is GAGKGT. Positions 30 to 59 are NMP; that stretch reads STGDMFRAAMANQTEMGRLAKSYIDKGELV. AMP contacts are provided by residues threonine 31, arginine 36, 57-59, 86-89, and glutamine 93; these read ELV and GYPR. The LID stretch occupies residues 127-159; sequence GRIINRKTGETFHKVFNPPVDYKEEDYYQREDD. ATP contacts are provided by residues arginine 128 and 137–138; that span reads TF. 2 residues coordinate AMP: arginine 156 and arginine 167. Position 195 (glutamine 195) interacts with ATP.

This sequence belongs to the adenylate kinase family. As to quaternary structure, monomer.

It localises to the cytoplasm. It carries out the reaction AMP + ATP = 2 ADP. Its pathway is purine metabolism; AMP biosynthesis via salvage pathway; AMP from ADP: step 1/1. Functionally, catalyzes the reversible transfer of the terminal phosphate group between ATP and AMP. Plays an important role in cellular energy homeostasis and in adenine nucleotide metabolism. This is Adenylate kinase from Streptococcus agalactiae serotype Ia (strain ATCC 27591 / A909 / CDC SS700).